The primary structure comprises 103 residues: Putative double-stranded DNA mimic protein APJL_1366 (103 aa).

It belongs to the putative dsDNA mimic protein family.

Its function is as follows. May act as a double-stranded DNA (dsDNA) mimic. Probably regulates the activity of a dsDNA-binding protein. This is Putative double-stranded DNA mimic protein APJL_1366 from Actinobacillus pleuropneumoniae serotype 3 (strain JL03).